A 437-amino-acid chain; its full sequence is Testis-specific Y-encoded-like protein 1 (437 aa).

The interval 1 to 81 (MSGLDGVKRT…QDAAGRGGTP (81 aa)) is disordered. Polar residues predominate over residues 11–26 (TPLQTHSIIISDQVPS). Over residues 28 to 40 (QDAHQYLRLRDQS) the composition is skewed to basic and acidic residues. Residue Lys156 forms a Glycyl lysine isopeptide (Lys-Gly) (interchain with G-Cter in SUMO2) linkage.

The protein belongs to the nucleosome assembly protein (NAP) family. In terms of processing, ubiquitinated by the CRL2(APPBP2) complex, which recognizes the Arg-Xaa-Xaa-Gly sequence at the C-terminus, leading to its degradation. In terms of tissue distribution, expressed in testis, ovary, liver, spleen, brain, kidney, prostate, lung, liver, and heart.

It localises to the nucleus. It is found in the nucleolus. This chain is Testis-specific Y-encoded-like protein 1 (TSPYL1), found in Homo sapiens (Human).